Reading from the N-terminus, the 283-residue chain is 4-diphosphocytidyl-2-C-methyl-D-erythritol kinase (283 aa).

Lysine 8 is an active-site residue. 90–100 contacts ATP; sequence PIGSGLAGGSS. Residue aspartate 132 is part of the active site.

The protein belongs to the GHMP kinase family. IspE subfamily.

The enzyme catalyses 4-CDP-2-C-methyl-D-erythritol + ATP = 4-CDP-2-C-methyl-D-erythritol 2-phosphate + ADP + H(+). It functions in the pathway isoprenoid biosynthesis; isopentenyl diphosphate biosynthesis via DXP pathway; isopentenyl diphosphate from 1-deoxy-D-xylulose 5-phosphate: step 3/6. Catalyzes the phosphorylation of the position 2 hydroxy group of 4-diphosphocytidyl-2C-methyl-D-erythritol. In Chlamydia muridarum (strain MoPn / Nigg), this protein is 4-diphosphocytidyl-2-C-methyl-D-erythritol kinase.